Here is a 213-residue protein sequence, read N- to C-terminus: N-(5'-phosphoribosyl)anthranilate isomerase (213 aa).

This sequence belongs to the TrpF family.

The enzyme catalyses N-(5-phospho-beta-D-ribosyl)anthranilate = 1-(2-carboxyphenylamino)-1-deoxy-D-ribulose 5-phosphate. Its pathway is amino-acid biosynthesis; L-tryptophan biosynthesis; L-tryptophan from chorismate: step 3/5. The protein is N-(5'-phosphoribosyl)anthranilate isomerase of Roseiflexus sp. (strain RS-1).